The primary structure comprises 400 residues: Acetate kinase (400 aa).

N7 provides a ligand contact to Mg(2+). K14 contributes to the ATP binding site. R90 is a substrate binding site. Catalysis depends on D147, which acts as the Proton donor/acceptor. ATP is bound by residues 207–211, 282–284, and 331–335; these read HLGNG, DFR, and GIGEN. Position 384 (E384) interacts with Mg(2+).

Belongs to the acetokinase family. As to quaternary structure, homodimer. Mg(2+) serves as cofactor. It depends on Mn(2+) as a cofactor.

Its subcellular location is the cytoplasm. It carries out the reaction acetate + ATP = acetyl phosphate + ADP. It participates in metabolic intermediate biosynthesis; acetyl-CoA biosynthesis; acetyl-CoA from acetate: step 1/2. Its function is as follows. Catalyzes the formation of acetyl phosphate from acetate and ATP. Can also catalyze the reverse reaction. The protein is Acetate kinase of Thermoanaerobacterium thermosaccharolyticum (strain ATCC 7956 / DSM 571 / NCIMB 9385 / NCA 3814 / NCTC 13789 / WDCM 00135 / 2032) (Clostridium thermosaccharolyticum).